Here is a 211-residue protein sequence, read N- to C-terminus: Troponin I, cardiac muscle (211 aa).

Ala-1 carries the N-acetylalanine modification. The tract at residues 1–43 (ADESRDAAGEARPAPAPVRRRSSANYRAYATEPHAKSKKKISA) is disordered. Phosphoserine is present on Ser-4. Ser-22 bears the Phosphoserine; by PHK, PKA and PKD/PRKD1 mark. Ser-23 bears the Phosphoserine; by PKA and PKD/PRKD1 mark. Tyr-26 carries the phosphotyrosine modification. Position 31 is a phosphothreonine; by STK4/MST1 (Thr-31). An involved in binding TNC region spans residues 32 to 79 (EPHAKSKKKISASRKLQLKTLMLQIAKQELEREAEERRGEKGRALSTR). A phosphoserine; by PKC/PRKCE mark is found at Ser-42 and Ser-44. Residue Thr-51 is modified to Phosphothreonine; by STK4/MST1. Residue Ser-77 is modified to Phosphoserine. The residue at position 78 (Thr-78) is a Phosphothreonine. Residues Thr-129 and Thr-143 each carry the phosphothreonine; by STK4/MST1 modification. Positions 129–150 (TQKIFDLRGKFKRPTLRLRVRI) are involved in binding TNC and actin. Ser-151 is subject to Phosphoserine; by PAK3. Thr-182 is subject to Phosphothreonine. Phosphoserine is present on Ser-200.

It belongs to the troponin I family. As to quaternary structure, interacts with TRIM63. Binds to actin and tropomyosin. Interacts with STK4/MST1. In terms of processing, phosphorylated at Ser-22 and Ser-23 by PRKD1; phosphorylation reduces myofilament calcium sensitivity. Phosphorylated preferentially at Thr-31. Phosphorylation by STK4/MST1 alters its binding affinity to TNNC1 (cardiac Tn-C) and TNNT2 (cardiac Tn-T). Phosphorylated at Ser-42 and Ser-44 by PRKCE; phosphorylation increases myocardium contractile dysfunction. Ser-22 is one of three sites in the region of residues 1-48 that are phosphorylated by phosphorylase kinase.

Functionally, troponin I is the inhibitory subunit of troponin, the thin filament regulatory complex which confers calcium-sensitivity to striated muscle actomyosin ATPase activity. This chain is Troponin I, cardiac muscle (TNNI3), found in Oryctolagus cuniculus (Rabbit).